The chain runs to 193 residues: Mediator of RNA polymerase II transcription subunit 20 (193 aa).

The protein belongs to the Mediator complex subunit 20 family. In terms of assembly, component of the Mediator complex.

The protein resides in the nucleus. Component of the Mediator complex, a coactivator involved in the regulated transcription of nearly all RNA polymerase II-dependent genes. Mediator functions as a bridge to convey information from gene-specific regulatory proteins to the basal RNA polymerase II transcription machinery. The Mediator complex, having a compact conformation in its free form, is recruited to promoters by direct interactions with regulatory proteins and serves for the assembly of a functional preinitiation complex with RNA polymerase II and the general transcription factors. The protein is Mediator of RNA polymerase II transcription subunit 20 (med20) of Schizosaccharomyces pombe (strain 972 / ATCC 24843) (Fission yeast).